The primary structure comprises 233 residues: Purine nucleoside phosphorylase DeoD-type (233 aa).

His4 serves as a coordination point for a purine D-ribonucleoside. Phosphate contacts are provided by residues Gly20, Arg24, Arg43, and 87 to 90 (RVGT). A purine D-ribonucleoside contacts are provided by residues Glu162, 179 to 181 (EME), and 203 to 204 (SD). Catalysis depends on Asp204, which acts as the Proton donor.

The protein belongs to the PNP/UDP phosphorylase family. In terms of assembly, homohexamer; trimer of homodimers.

It catalyses the reaction a purine D-ribonucleoside + phosphate = a purine nucleobase + alpha-D-ribose 1-phosphate. The catalysed reaction is a purine 2'-deoxy-D-ribonucleoside + phosphate = a purine nucleobase + 2-deoxy-alpha-D-ribose 1-phosphate. Its function is as follows. Catalyzes the reversible phosphorolytic breakdown of the N-glycosidic bond in the beta-(deoxy)ribonucleoside molecules, with the formation of the corresponding free purine bases and pentose-1-phosphate. In Alkaliphilus metalliredigens (strain QYMF), this protein is Purine nucleoside phosphorylase DeoD-type.